Here is a 172-residue protein sequence, read N- to C-terminus: EPIDERMAL PATTERNING FACTOR-like protein 7 (172 aa).

The first 27 residues, 1–27 (MDHVNPTLFHLKSLSIFTLTLLYISSP), serve as a signal peptide directing secretion. 4 disulfides stabilise this stretch: C128/C159, C132/C138, C135/C161, and C147/C153.

It belongs to the plant cysteine rich small secretory peptide family. Epidermal patterning factor subfamily.

The protein resides in the secreted. Functionally, controls stomatal patterning. In Arabidopsis thaliana (Mouse-ear cress), this protein is EPIDERMAL PATTERNING FACTOR-like protein 7.